The primary structure comprises 104 residues: Naphthalene 1,2-dioxygenase/salicylate 5-hydroxylase systems, ferredoxin component (104 aa).

The region spanning 6–101 is the Rieske domain; it reads IDAACLDDIP…VKIENMRVML (96 aa). Positions 45, 47, 64, and 67 each coordinate [2Fe-2S] cluster.

The protein belongs to the bacterial ring-hydroxylating dioxygenase ferredoxin component family. In terms of assembly, ferredoxin NagAb belongs to both the salicylate 5-hydroxylase (S5H) and the naphthalene 1,2-dioxygenase (NDO) multicomponent enzyme systems. The NDO multicomponent enzyme system is composed of an electron transfer component and a dioxygenase component (iron sulfur protein (ISP)). The electron transfer component is composed of a ferredoxin reductase (NagAa) and a ferredoxin (NagAb), and the dioxygenase component is formed by a large alpha subunit (NagAc) and a small beta subunit (NagAd). The S5H multicomponent enzyme system is composed of an electron transfer component and a monooxygenase component. The electron transfer component is composed of a ferredoxin reductase (NagAa) and a ferredoxin (NagAb), and the monooxygenase component is formed by a large subunit (NagG) and a small subunit (NagH). [2Fe-2S] cluster is required as a cofactor.

The protein operates within aromatic compound metabolism; naphthalene degradation. Component of two multicomponent enzyme systems which are involved in the catabolism of naphthalene. Plays a role as an electron transfer component for both salicylate 5-hydroxylase (S5H) and naphthalene 1,2-dioxygenase (NDO) systems, by transferring electrons to the oxygenase components. The protein is Naphthalene 1,2-dioxygenase/salicylate 5-hydroxylase systems, ferredoxin component of Ralstonia sp.